The following is a 500-amino-acid chain: Raftlin-2 (500 aa).

A lipid anchor (N-myristoyl glycine) is attached at G2. C3 carries S-palmitoyl cysteine lipidation. The segment at 203-236 is disordered; that stretch reads GHLSESGVEEEPQHESGQHQTERNSSPSYANPKR. Residues 213 to 224 are compositionally biased toward basic and acidic residues; sequence EPQHESGQHQTE. S404 carries the phosphoserine modification. Residues 406–500 are disordered; the sequence is AQTPERKGSR…EEGVTQVTCM (95 aa). T408 carries the phosphothreonine modification. Basic and acidic residues predominate over residues 409 to 424; it reads PERKGSRLLKGEDRNK. Positions 426-438 are enriched in polar residues; it reads SSRSLGLDTNASQ. At S429 the chain carries Phosphoserine. The segment covering 467–478 has biased composition (low complexity); the sequence is SDSFSGFSSSDS.

Belongs to the raftlin family. In terms of tissue distribution, expressed in B-cells, heart, brain, spleen, large intestine and lung. Expressed in dendritic cells and macrophages.

It is found in the cell membrane. Its function is as follows. Upon bacterial lipopolysaccharide stimulation, mediates clathrin-dependent internalization of TLR4 in dendritic cells, resulting in activation of TICAM1-mediated signaling and subsequent IFNB1 production. May regulate B-cell antigen receptor-mediated signaling. In Mus musculus (Mouse), this protein is Raftlin-2 (Rftn2).